The following is a 251-amino-acid chain: Imidazole glycerol phosphate synthase subunit HisF (251 aa).

Residues aspartate 11 and aspartate 130 contribute to the active site.

It belongs to the HisA/HisF family. As to quaternary structure, heterodimer of HisH and HisF.

Its subcellular location is the cytoplasm. It carries out the reaction 5-[(5-phospho-1-deoxy-D-ribulos-1-ylimino)methylamino]-1-(5-phospho-beta-D-ribosyl)imidazole-4-carboxamide + L-glutamine = D-erythro-1-(imidazol-4-yl)glycerol 3-phosphate + 5-amino-1-(5-phospho-beta-D-ribosyl)imidazole-4-carboxamide + L-glutamate + H(+). It functions in the pathway amino-acid biosynthesis; L-histidine biosynthesis; L-histidine from 5-phospho-alpha-D-ribose 1-diphosphate: step 5/9. In terms of biological role, IGPS catalyzes the conversion of PRFAR and glutamine to IGP, AICAR and glutamate. The HisF subunit catalyzes the cyclization activity that produces IGP and AICAR from PRFAR using the ammonia provided by the HisH subunit. In Chloroherpeton thalassium (strain ATCC 35110 / GB-78), this protein is Imidazole glycerol phosphate synthase subunit HisF.